A 529-amino-acid polypeptide reads, in one-letter code: Ribonuclease Y (529 aa).

Residues Gly4–Tyr24 form a helical membrane-spanning segment. Residues Leu216 to Val297 form the KH domain. The HD domain occupies Ala342 to Gly435.

Belongs to the RNase Y family.

The protein localises to the cell membrane. In terms of biological role, endoribonuclease that initiates mRNA decay. The sequence is that of Ribonuclease Y from Helicobacter pylori (strain HPAG1).